Consider the following 391-residue polypeptide: ATP phosphoribosyltransferase regulatory subunit (391 aa).

Belongs to the class-II aminoacyl-tRNA synthetase family. HisZ subfamily. In terms of assembly, heteromultimer composed of HisG and HisZ subunits.

It localises to the cytoplasm. It participates in amino-acid biosynthesis; L-histidine biosynthesis; L-histidine from 5-phospho-alpha-D-ribose 1-diphosphate: step 1/9. In terms of biological role, required for the first step of histidine biosynthesis. May allow the feedback regulation of ATP phosphoribosyltransferase activity by histidine. The chain is ATP phosphoribosyltransferase regulatory subunit from Prochlorococcus marinus (strain NATL2A).